The following is a 354-amino-acid chain: MRVDAFDFDLPPERIALRPAEPRESARLLRVRPGAAPELEDRTIADLPDLLQPGDALVVNDTKVIPARLDGTRTRAGGSTVAIEATLIRRLSGSAWAAFAKPAKRLAVGETVVFAGASGGTLEARVLDKLESGEVHFAFALSGPELDAAIDAIGHMPLPPYIAAKRPEDDRDRTDYQPVFARVEGSVAAPTASLHFTPDLLAKIAARGVSRYTVTLHVGAGTFLPVKAEDTTDHQMHAEWGEVSPETAAELNAVKARGGRIITVGSTATRLIETAATPEGSIRPYLGETDIFITPGYAFRASDVMLTNFHLPRSTLVMLVAAFVGHETQKRAYAHAIASGYRFYSYGDACLLER.

It belongs to the QueA family. In terms of assembly, monomer.

Its subcellular location is the cytoplasm. It carries out the reaction 7-aminomethyl-7-carbaguanosine(34) in tRNA + S-adenosyl-L-methionine = epoxyqueuosine(34) in tRNA + adenine + L-methionine + 2 H(+). The protein operates within tRNA modification; tRNA-queuosine biosynthesis. Its function is as follows. Transfers and isomerizes the ribose moiety from AdoMet to the 7-aminomethyl group of 7-deazaguanine (preQ1-tRNA) to give epoxyqueuosine (oQ-tRNA). The protein is S-adenosylmethionine:tRNA ribosyltransferase-isomerase of Azorhizobium caulinodans (strain ATCC 43989 / DSM 5975 / JCM 20966 / LMG 6465 / NBRC 14845 / NCIMB 13405 / ORS 571).